A 221-amino-acid chain; its full sequence is Carotenogenesis protein CarR (221 aa).

6 consecutive transmembrane segments (helical) span residues 56-76 (LGLLAAVVLLAVGAVTGPLLL), 79-99 (APLLAMLVGTSAVCAWGALSP), 107-127 (LGVGLAVVSAAALVLARGAPH), 136-156 (VCTVSHLAIGVVPLVVALFAL), 166-186 (AVVAGLSVGSTGALLGELACE), and 191-211 (HVLSHHLLAWVVITVVLVVIS).

Its subcellular location is the cell inner membrane. Its function is as follows. Negative regulator of the carotenoid synthesis regulon. It is probably inactivated by protoporphyrin IX in the presence of blue light. Inactivation of CarR leads to loss of negative control over the carotenogenesis protein CarQ. This Myxococcus xanthus protein is Carotenogenesis protein CarR (carR).